Here is a 476-residue protein sequence, read N- to C-terminus: Protein transport protein Sec61 subunit alpha (476 aa).

Topologically, residues 2 to 33 (GIKFLEFIKPFCAVLPEIQKPERKIQFREKVL) are cytoplasmic. Residues 34–53 (WTAITLFIFLVCCQIPLFGI) form a helical membrane-spanning segment. The Lumenal segment spans residues 54-76 (MSSDSADPFYWMRVILASNRGTL). Residues 77–96 (MELGIAPIVTSGLIMQLLAG) form a helical membrane-spanning segment. Over 97-117 (AKIIEVGDTPKDRALFNGAQK) the chain is Cytoplasmic. Residues 118–138 (LFGMIITIGQAIVYVMTGMYG) traverse the membrane as a helical segment. At 139–144 (DPSEMG) the chain is on the lumenal side. The helical transmembrane segment at 145–165 (AGICLLIIIQLFVAGLIVLLL) threads the bilayer. Residues 166-172 (DELLQKG) are Cytoplasmic-facing. Residues 173–193 (YGLGSGISLFIATNICETIVW) traverse the membrane as a helical segment. The Lumenal portion of the chain corresponds to 194–240 (KAFGPTTVNTGRGTEFEGAIIALFHLLATRTDKVRALREAFYRQNLP). Residues 241–261 (NLMNLIATVFVFAVVIYFQGF) form a helical membrane-spanning segment. Residues 262–288 (RVDLPIKSARYRGQYNTYPIKLFYTSN) lie on the Cytoplasmic side of the membrane. The chain crosses the membrane as a helical span at residues 289–309 (IPIILQSALVSNLYVISQMLS). Residues 310–354 (TRFSGNFLVNLLGTWSDATTSGPARAYPVAGLCYYLSPPESFGSV) are Lumenal-facing. The chain crosses the membrane as a helical span at residues 355-375 (LDDPVHAVIYIVFMLGSCAFF). Residues 376-420 (SKTWIEVSGSSAKDVAKQLKEQQMVMRGHRETSMVHELNRYIPTA) are Cytoplasmic-facing. The chain crosses the membrane as a helical span at residues 421 to 441 (AAFGGLCIGGLSVMADFLGAI). Topologically, residues 442 to 445 (GSGT) are lumenal. Residues 446-462 (GILLAVTIIYQYFEIFV) form a helical membrane-spanning segment. The Cytoplasmic portion of the chain corresponds to 463 to 476 (KEQSEVGSMGALLF).

It belongs to the SecY/SEC61-alpha family. The SEC61 channel-forming translocon complex consists of channel-forming core components SEC61A1, SEC61B and SEC61G and different auxiliary components such as SEC62 and SEC63. The SEC61 channel associates with the multi-pass translocon (MPT) complex.

The protein localises to the endoplasmic reticulum membrane. Component of SEC61 channel-forming translocon complex that mediates transport of signal peptide-containing precursor polypeptides across the endoplasmic reticulum (ER). Forms a ribosome receptor and a gated pore in the ER membrane, both functions required for cotranslational translocation of nascent polypeptides. May cooperate with auxiliary protein SEC62, SEC63 and HSPA5/BiP to enable post-translational transport of small presecretory proteins. The SEC61 channel is also involved in ER membrane insertion of transmembrane proteins: it mediates membrane insertion of the first few transmembrane segments of proteins, while insertion of subsequent transmembrane regions of multi-pass membrane proteins is mediated by the multi-pass translocon (MPT) complex. The chain is Protein transport protein Sec61 subunit alpha (sec61a) from Bovichtus variegatus (Thornfish).